A 515-amino-acid polypeptide reads, in one-letter code: Brahma-associated protein of 60 kDa (515 aa).

The disordered stretch occupies residues 1–124; the sequence is MSQRFAPGQA…GGSKSDFATA (124 aa). Residues 17-34 show a composition bias toward pro residues; that stretch reads QPPPPAPGMRPYPPPGAS. Residues 49–62 are compositionally biased toward low complexity; the sequence is PVPGTANVAGVPGV. Over residues 90–103 the composition is skewed to gly residues; that stretch reads TGAGGGGVGSGGGS. Residues 116-204 are DNA-binding; sequence GSKSDFATAK…SKEPTNDGEE (89 aa). Residues 291–368 form the SWIB/MDM2 domain; the sequence is YQPLQFKLDP…PQRLNPLLHP (78 aa).

As to quaternary structure, there are 2 distinct Brahma complexes in the fruit fly, the Brahma-associated proteins (BAP) and Polybromo-containing BAP (PBAP) complexes, which are composed of common subunits Brm, Mor, Snr1/Bap45, Bap111/Dalo, Bap55, Bap60 and Act42A/Bap47, and additional signature subunits osa in the BAP complex and Polybromo and Bap170 in the PBAP complex. Interacts with sisA and sc. Interacts with mor. Interacts with p53. Interacts with erm (via N-terminal). Interacts with akirin; interaction is immune stimulation-dependent; activates selected Rel target gene promoters.

Involved in the recruitment and site-specific anchoring of the Brahma complex at specific promoter sites. The Brahma complex is a multiprotein complex which is the equivalent of the yeast SWI/SNF complex and acts by remodeling the chromatin by catalyzing an ATP-dependent alteration in the structure of nucleosomal DNA. This complex can both serve as a transcriptional coactivator or corepressor, depending on the context. Participates in X-chromosomal dosage compensation. Participates in neurogenesis. The sequence is that of Brahma-associated protein of 60 kDa (Bap60) from Drosophila melanogaster (Fruit fly).